The following is a 117-amino-acid chain: MTDPELERIRRKKIMELQRKLEESQEKKVEEEREKKALEEAQRRAMLRRILTPEARERLARVRLARPQLAQAVENYLLQLAQTGQLKEKIDEDQLKRILKQVSDATRKEYRIRFKRK.

It belongs to the PDCD5 family.

In Methanopyrus kandleri (strain AV19 / DSM 6324 / JCM 9639 / NBRC 100938), this protein is DNA-binding protein MK1619.